Consider the following 304-residue polypeptide: Recombination-associated protein RdgC (304 aa).

The protein belongs to the RdgC family.

The protein localises to the cytoplasm. The protein resides in the nucleoid. Its function is as follows. May be involved in recombination. The chain is Recombination-associated protein RdgC from Shewanella baltica (strain OS195).